Consider the following 270-residue polypeptide: ATP synthase subunit delta (270 aa).

This sequence belongs to the ATPase delta chain family. As to quaternary structure, F-type ATPases have 2 components, F(1) - the catalytic core - and F(0) - the membrane proton channel. F(1) has five subunits: alpha(3), beta(3), gamma(1), delta(1), epsilon(1). F(0) has three main subunits: a(1), b(2) and c(10-14). The alpha and beta chains form an alternating ring which encloses part of the gamma chain. F(1) is attached to F(0) by a central stalk formed by the gamma and epsilon chains, while a peripheral stalk is formed by the delta and b chains.

The protein resides in the cell membrane. In terms of biological role, f(1)F(0) ATP synthase produces ATP from ADP in the presence of a proton or sodium gradient. F-type ATPases consist of two structural domains, F(1) containing the extramembraneous catalytic core and F(0) containing the membrane proton channel, linked together by a central stalk and a peripheral stalk. During catalysis, ATP synthesis in the catalytic domain of F(1) is coupled via a rotary mechanism of the central stalk subunits to proton translocation. Functionally, this protein is part of the stalk that links CF(0) to CF(1). It either transmits conformational changes from CF(0) to CF(1) or is implicated in proton conduction. The protein is ATP synthase subunit delta of Kocuria rhizophila (strain ATCC 9341 / DSM 348 / NBRC 103217 / DC2201).